The primary structure comprises 84 residues: Putative membrane protein insertion efficiency factor (84 aa).

A disordered region spans residues 63-84 (LGGSGYDPPPPPKTPRKWKCEE).

This sequence belongs to the UPF0161 family.

The protein localises to the cell inner membrane. Its function is as follows. Could be involved in insertion of integral membrane proteins into the membrane. The chain is Putative membrane protein insertion efficiency factor from Caulobacter sp. (strain K31).